Consider the following 445-residue polypeptide: Phosphoglucosamine mutase (445 aa).

Serine 99 functions as the Phosphoserine intermediate in the catalytic mechanism. Residues serine 99, aspartate 242, aspartate 244, and aspartate 246 each contribute to the Mg(2+) site. Serine 99 carries the phosphoserine modification.

The protein belongs to the phosphohexose mutase family. Mg(2+) is required as a cofactor. In terms of processing, activated by phosphorylation.

The catalysed reaction is alpha-D-glucosamine 1-phosphate = D-glucosamine 6-phosphate. Functionally, catalyzes the conversion of glucosamine-6-phosphate to glucosamine-1-phosphate. In Campylobacter lari (strain RM2100 / D67 / ATCC BAA-1060), this protein is Phosphoglucosamine mutase.